The following is a 465-amino-acid chain: Probable M18 family aminopeptidase 1 (465 aa).

Zn(2+) is bound by residues H105, H180, and H441.

This sequence belongs to the peptidase M18 family. Zn(2+) is required as a cofactor.

This is Probable M18 family aminopeptidase 1 (apeA) from Clostridium acetobutylicum (strain ATCC 824 / DSM 792 / JCM 1419 / IAM 19013 / LMG 5710 / NBRC 13948 / NRRL B-527 / VKM B-1787 / 2291 / W).